A 420-amino-acid polypeptide reads, in one-letter code: UDP-N-acetylglucosamine 1-carboxyvinyltransferase 2 (420 aa).

22-23 (KN) serves as a coordination point for phosphoenolpyruvate. Arg92 lines the UDP-N-acetyl-alpha-D-glucosamine pocket. Catalysis depends on Cys116, which acts as the Proton donor. Cys116 is modified (2-(S-cysteinyl)pyruvic acid O-phosphothioketal). Residues 121-125 (RPIDL), Asp307, and Ile329 each bind UDP-N-acetyl-alpha-D-glucosamine.

This sequence belongs to the EPSP synthase family. MurA subfamily.

Its subcellular location is the cytoplasm. It carries out the reaction phosphoenolpyruvate + UDP-N-acetyl-alpha-D-glucosamine = UDP-N-acetyl-3-O-(1-carboxyvinyl)-alpha-D-glucosamine + phosphate. It functions in the pathway cell wall biogenesis; peptidoglycan biosynthesis. Cell wall formation. Adds enolpyruvyl to UDP-N-acetylglucosamine. In Streptococcus thermophilus (strain CNRZ 1066), this protein is UDP-N-acetylglucosamine 1-carboxyvinyltransferase 2.